A 141-amino-acid chain; its full sequence is Large ribosomal subunit protein uL11 (141 aa).

Belongs to the universal ribosomal protein uL11 family. Part of the ribosomal stalk of the 50S ribosomal subunit. Interacts with L10 and the large rRNA to form the base of the stalk. L10 forms an elongated spine to which L12 dimers bind in a sequential fashion forming a multimeric L10(L12)X complex. Post-translationally, one or more lysine residues are methylated.

Its function is as follows. Forms part of the ribosomal stalk which helps the ribosome interact with GTP-bound translation factors. In Helicobacter acinonychis (strain Sheeba), this protein is Large ribosomal subunit protein uL11.